The chain runs to 307 residues: Ribonuclease Z (307 aa).

Zn(2+) is bound by residues histidine 63, histidine 65, aspartate 67, histidine 68, histidine 141, aspartate 212, and histidine 270. Residue aspartate 67 is the Proton acceptor of the active site.

It belongs to the RNase Z family. Homodimer. Zn(2+) serves as cofactor.

It carries out the reaction Endonucleolytic cleavage of RNA, removing extra 3' nucleotides from tRNA precursor, generating 3' termini of tRNAs. A 3'-hydroxy group is left at the tRNA terminus and a 5'-phosphoryl group is left at the trailer molecule.. In terms of biological role, zinc phosphodiesterase, which displays some tRNA 3'-processing endonuclease activity. Probably involved in tRNA maturation, by removing a 3'-trailer from precursor tRNA. The sequence is that of Ribonuclease Z from Bacillus cereus (strain G9842).